The primary structure comprises 146 residues: Antiholin-like protein LrgA (146 aa).

4 helical membrane-spanning segments follow: residues 7 to 29 (YGFL…IAAI), 34 to 53 (IPAS…LKVI), 65 to 87 (LTSL…LGVM), and 97 to 119 (VILL…ILSL).

It belongs to the CidA/LrgA family. LrgA subfamily.

It is found in the cell membrane. Inhibits the expression or activity of extracellular murein hydrolases by interacting, possibly with LrgB, with the holin-like protein CidA. The LrgAB and CidA proteins may affect the proton motive force of the membrane. May be involved in programmed cell death (PCD), possibly triggering PCD in response to antibiotics and environmental stresses. The chain is Antiholin-like protein LrgA from Bacillus subtilis (strain 168).